The primary structure comprises 249 residues: Enolase-phosphatase E1 (249 aa).

Mg(2+)-binding residues include Asp14 and Glu16. Substrate contacts are provided by residues 141 to 142 and Lys175; that span reads SS. Asp200 contributes to the Mg(2+) binding site.

The protein belongs to the HAD-like hydrolase superfamily. MasA/MtnC family. As to quaternary structure, monomer. Requires Mg(2+) as cofactor.

Its subcellular location is the cytoplasm. The protein localises to the nucleus. The catalysed reaction is 5-methylsulfanyl-2,3-dioxopentyl phosphate + H2O = 1,2-dihydroxy-5-(methylsulfanyl)pent-1-en-3-one + phosphate. It functions in the pathway amino-acid biosynthesis; L-methionine biosynthesis via salvage pathway; L-methionine from S-methyl-5-thio-alpha-D-ribose 1-phosphate: step 3/6. The protein operates within amino-acid biosynthesis; L-methionine biosynthesis via salvage pathway; L-methionine from S-methyl-5-thio-alpha-D-ribose 1-phosphate: step 4/6. Its function is as follows. Bifunctional enzyme that catalyzes the enolization of 2,3-diketo-5-methylthiopentyl-1-phosphate (DK-MTP-1-P) into the intermediate 2-hydroxy-3-keto-5-methylthiopentenyl-1-phosphate (HK-MTPenyl-1-P), which is then dephosphorylated to form the acireductone 1,2-dihydroxy-3-keto-5-methylthiopentene (DHK-MTPene). In Drosophila virilis (Fruit fly), this protein is Enolase-phosphatase E1.